Here is a 451-residue protein sequence, read N- to C-terminus: UDP-N-acetylmuramate--L-alanine ligase (451 aa).

An ATP-binding site is contributed by 110–116 (GTHGKTT).

Belongs to the MurCDEF family.

Its subcellular location is the cytoplasm. It carries out the reaction UDP-N-acetyl-alpha-D-muramate + L-alanine + ATP = UDP-N-acetyl-alpha-D-muramoyl-L-alanine + ADP + phosphate + H(+). The protein operates within cell wall biogenesis; peptidoglycan biosynthesis. Cell wall formation. The polypeptide is UDP-N-acetylmuramate--L-alanine ligase (Francisella tularensis subsp. mediasiatica (strain FSC147)).